Reading from the N-terminus, the 219-residue chain is 7-cyano-7-deazaguanine synthase (219 aa).

An ATP-binding site is contributed by 10–20 (FSGGQDSTTCL). Positions 188, 197, 200, and 203 each coordinate Zn(2+).

This sequence belongs to the QueC family. Homodimer. Requires Zn(2+) as cofactor.

It catalyses the reaction 7-carboxy-7-deazaguanine + NH4(+) + ATP = 7-cyano-7-deazaguanine + ADP + phosphate + H2O + H(+). Its pathway is purine metabolism; 7-cyano-7-deazaguanine biosynthesis. Functionally, catalyzes the ATP-dependent conversion of 7-carboxy-7-deazaguanine (CDG) to 7-cyano-7-deazaguanine (preQ(0)). The sequence is that of 7-cyano-7-deazaguanine synthase from Clostridium botulinum (strain ATCC 19397 / Type A).